Consider the following 193-residue polypeptide: Large ribosomal subunit protein bL25 (193 aa).

Belongs to the bacterial ribosomal protein bL25 family. CTC subfamily. As to quaternary structure, part of the 50S ribosomal subunit; part of the 5S rRNA/L5/L18/L25 subcomplex. Contacts the 5S rRNA. Binds to the 5S rRNA independently of L5 and L18.

Functionally, this is one of the proteins that binds to the 5S RNA in the ribosome where it forms part of the central protuberance. In Oleidesulfovibrio alaskensis (strain ATCC BAA-1058 / DSM 17464 / G20) (Desulfovibrio alaskensis), this protein is Large ribosomal subunit protein bL25.